The primary structure comprises 1041 residues: Protein EGT2 (1041 aa).

The first 20 residues, 1 to 20 (MNKLLLHLVRVISILGLANA), serve as a signal peptide directing secretion. Residues asparagine 65, asparagine 103, asparagine 161, asparagine 175, asparagine 249, asparagine 332, asparagine 401, asparagine 435, asparagine 465, asparagine 485, asparagine 506, asparagine 526, asparagine 544, and asparagine 556 are each glycosylated (N-linked (GlcNAc...) asparagine). Residues 388 to 410 (SSSSISLSAPSSSNSTFTTPSSS) are disordered. Repeat 1 spans residues 457-492 (SSTLSYTSNVTISVSSATQHTTTPSYVSNSTTLSSS). The tract at residues 457–962 (SSTLSYTSNV…TLKTSTFQKA (506 aa)) is 9 X approximate repeats. Tandem repeats lie at residues 577–606 (TVAS…ISTI) and 613–647 (SGTD…INTN). 4 N-linked (GlcNAc...) asparagine glycosylation sites follow: asparagine 635, asparagine 636, asparagine 657, and asparagine 709. Residues 716–745 (TDKSDTYSVISSTESAQVTEYDSLLPISTL) form repeat 4. Asparagine 756 is a glycosylation site (N-linked (GlcNAc...) asparagine). Tandem repeats lie at residues 773 to 802 (TDKG…ISTL), 811 to 840 (TDES…ISTL), 849 to 886 (TGES…TSLS), 887 to 924 (TEES…TSLS), and 925 to 962 (TEES…FQKA). Residue glycine 1020 is the site of GPI-anchor amidated glycine attachment. The propeptide at 1021–1041 (AAGQLTIRIGSLLLGLISFLL) is removed in mature form.

Post-translationally, the GPI-anchor is attached to the protein in the endoplasmic reticulum and serves to target the protein to the cell surface. There, the glucosamine-inositol phospholipid moiety is cleaved off and the GPI-modified mannoprotein is covalently attached via its lipidless GPI glycan remnant to the 1,6-beta-glucan of the outer cell wall layer.

It localises to the secreted. Its subcellular location is the cell wall. The protein localises to the membrane. In terms of biological role, seems to be involved in the correct timing of cell separation after cytokinesis, as separation of mutant daughter cells is delayed. Could either be an enzyme necessary for glucans-degradation of the cell wall at the neck region between mother and daughter cells or a regulatory protein controlling this metabolic step. The protein is Protein EGT2 (EGT2) of Saccharomyces cerevisiae (strain ATCC 204508 / S288c) (Baker's yeast).